The chain runs to 390 residues: Elongation factor Tu 2 (390 aa).

Residues Lys10–Glu203 form the tr-type G domain. The G1 stretch occupies residues Gly19–Thr26. Gly19–Thr26 provides a ligand contact to GTP. Residue Thr26 coordinates Mg(2+). Positions Gly60–Asn64 are G2. Residues Asp81 to Gly84 form a G3 region. GTP-binding positions include Asp81–His85 and Asn136–Asp139. The interval Asn136–Asp139 is G4. The segment at Ser173–Leu175 is G5.

It belongs to the TRAFAC class translation factor GTPase superfamily. Classic translation factor GTPase family. EF-Tu/EF-1A subfamily. Monomer.

The protein localises to the cytoplasm. It carries out the reaction GTP + H2O = GDP + phosphate + H(+). GTP hydrolase that promotes the GTP-dependent binding of aminoacyl-tRNA to the A-site of ribosomes during protein biosynthesis. The protein is Elongation factor Tu 2 of Streptomyces avermitilis (strain ATCC 31267 / DSM 46492 / JCM 5070 / NBRC 14893 / NCIMB 12804 / NRRL 8165 / MA-4680).